Consider the following 204-residue polypeptide: Bcl-2-like protein 10 (204 aa).

The BH1 motif lies at 86–105 (LSDSPGPTWGRVVTLVTFAG). The interval 118 to 133 (WKKWGFQPRLKEQEGD) is required for Ca(2+) binding. Residues Lys-119, Lys-120, and Lys-128 each participate in a glycyl lysine isopeptide (Lys-Gly) (interchain with G-Cter in ubiquitin) cross-link. The BH2 signature appears at 156-167 (WLQAQGGWDGFC). A helical transmembrane segment spans residues 183–200 (LVQAFLSCLLTTAFIYLW).

It belongs to the Bcl-2 family. In terms of assembly, interacts with BAX. Interacts with BCL2 and BCL2L1/BCLX. Interacts with APAF1. Interacts with ITPR1, ITPR2 and ITPR3; the interaction with ITPR1 is increased in the presence of AHCLY1. Interacts with AHCYL1. Interacts with HIP1R (via ENTH and I/LWEQ domains). Interacts with CASP9. Interacts with BCL2L11/BIM. Interacts with BIK. Interacts with UBQLN4. Interacts with NME2/NM23-H2. Interacts with PMAIP1/NOXA. Interacts with TPX2. Interacts with UBQLN1; in the cytoplasm. Interacts (via BH1 domain) with BECN1. Ca(2+) serves as cofactor. Post-translationally, monoubiquitinated by UBQLN1; results in stabilization of BCL2L10 protein abundance and in relocalization from mitochondria to cytoplasm. Widely expressed in adult tissues. Preferentially expressed in lung, liver and kidney.

It is found in the mitochondrion. The protein resides in the nucleus membrane. It localises to the endoplasmic reticulum. The protein localises to the cytoplasm. Its subcellular location is the cytoskeleton. It is found in the spindle. Promotes cell survival by suppressing apoptosis induced by BAX but not BAK. Increases binding of AHCYL1/IRBIT to ITPR1. Reduces ITPR1-mediated calcium release from the endoplasmic reticulum cooperatively with AHCYL1/IRBIT under normal cellular conditions. Under apoptotic stress conditions, dissociates from ITPR1 and is displaced from mitochondria-associated endoplasmic reticulum membranes, leading to increased Ca(2+) transfer to mitochondria which promotes apoptosis. Required for the correct formation of the microtubule organizing center during oocyte cell division, potentially via regulation of protein abundance and localization of other microtubule organizing center components such as AURKA and TPX2. This Homo sapiens (Human) protein is Bcl-2-like protein 10.